Consider the following 458-residue polypeptide: ATP synthase subunit beta (458 aa).

148–155 (GGAGVGKT) provides a ligand contact to ATP.

It belongs to the ATPase alpha/beta chains family. As to quaternary structure, F-type ATPases have 2 components, CF(1) - the catalytic core - and CF(0) - the membrane proton channel. CF(1) has five subunits: alpha(3), beta(3), gamma(1), delta(1), epsilon(1). CF(0) has three main subunits: a(1), b(2) and c(9-12). The alpha and beta chains form an alternating ring which encloses part of the gamma chain. CF(1) is attached to CF(0) by a central stalk formed by the gamma and epsilon chains, while a peripheral stalk is formed by the delta and b chains.

It is found in the cell inner membrane. The catalysed reaction is ATP + H2O + 4 H(+)(in) = ADP + phosphate + 5 H(+)(out). Functionally, produces ATP from ADP in the presence of a proton gradient across the membrane. The catalytic sites are hosted primarily by the beta subunits. This chain is ATP synthase subunit beta, found in Ectopseudomonas mendocina (strain ymp) (Pseudomonas mendocina).